Consider the following 277-residue polypeptide: Thymidylate synthase (277 aa).

Arg-21 provides a ligand contact to dUMP. A (6R)-5,10-methylene-5,6,7,8-tetrahydrofolate-binding site is contributed by His-51. A dUMP-binding site is contributed by 126 to 127; the sequence is RR. The active-site Nucleophile is Cys-159. Residues 179–182, Asn-190, and 220–222 contribute to the dUMP site; these read RSAD and HLY. Position 182 (Asp-182) interacts with (6R)-5,10-methylene-5,6,7,8-tetrahydrofolate. Position 276 (Ser-276) interacts with (6R)-5,10-methylene-5,6,7,8-tetrahydrofolate.

This sequence belongs to the thymidylate synthase family. Bacterial-type ThyA subfamily. In terms of assembly, homodimer.

It is found in the cytoplasm. It carries out the reaction dUMP + (6R)-5,10-methylene-5,6,7,8-tetrahydrofolate = 7,8-dihydrofolate + dTMP. The protein operates within pyrimidine metabolism; dTTP biosynthesis. In terms of biological role, catalyzes the reductive methylation of 2'-deoxyuridine-5'-monophosphate (dUMP) to 2'-deoxythymidine-5'-monophosphate (dTMP) while utilizing 5,10-methylenetetrahydrofolate (mTHF) as the methyl donor and reductant in the reaction, yielding dihydrofolate (DHF) as a by-product. This enzymatic reaction provides an intracellular de novo source of dTMP, an essential precursor for DNA biosynthesis. The chain is Thymidylate synthase from Teredinibacter turnerae (strain ATCC 39867 / T7901).